Reading from the N-terminus, the 2359-residue chain is MPVLGVASKLRQPAVGPKPVHAALPIPNLGISVSRRCSSRPLEFATPERSMLSCQLTLKSTCEFGEKKALQGTAKEIEDSKIYTDWANHYLAKSGHKRLIKDLQQDIADGVLLADIIQIIANEKVEDINGCPRSQSQMIENVDVCLSFLAARGVNVQGLSAEEIRNGNLKAILGLFFSLSRYKQQQHHQQQYYQSLVELQQRVTHTAPQSEASQAKTQQDMQSSLTARYAAQSKHSGIATSQKKPTRLPGPSRVPAASSSNKAQGASNLNRRSQSFNSIDKNKPPNYANGNEKDSPKGPQPSSGINGNTQPPSTSGQPPASAIPSPSASKPWRSKSMNVKHSATSTMLTVKQPSPATSPTPSSDRLKPPVTEGVKSAPSGQKSMLEKFKLVNARTALRPPQAPSSGPNDGGREDDAFSESGEMEGFNSGLNSGGSTNSSPKVSPKLTPPKAGSKNFSNKKSLLQPKEKEEKTRDKNKACAEKSGKEEKDQVTTEAAPKKTSKIASLIPKGSKTAAAKKESLIPSSSGIPKPGSKVPTPKQTISPGSAASKESEKFRTSKGSSSQAFPKAITAEKASTPSLSTPLDGREAGQASPSSSCVMQVTHSSGQSPGNGAVQLPQQQQHSHPNTATVAPFIYRAHSENEGTSLPPADSCTSPTKMDSSYSKTAKQCLEEISGEDPEARRMRTVKNIADLRQNLEETMSSLRGTQISHSTLETTFDTTVTTEVNGRAIPNLTSRPSPMTWRLGQACPRLQAGDAPSMGAGYSRSGTSRFIHTDPSRFMYTTPLRRAAVSRLGNMSQIDMSEKASSDLDVSSEVDVGGYMSDGDILGKSLRADDINSGYMTDGGLNLYTRSLNRVPDTATSRDVIQRGVHDVTVDADSWDDSSSVSSGLSDTLDNISTDDLNTTSSISSYSNITVPSRKNTQLKTDAEKRSTTDETWDSPEELKKAEGDCDSHGDGAAKWKGATSGLAEDSEKTGQKASLSVSQTGSWRRGMSAQGGTPATARQKTSTSALKTPGKTDDAKASEKGKTPLKGSSLQRSPSDAGKSSGDEGKKPPSGIGRSTASSSFGYKKPSGVGASTMITSSGATITSGSATLGKIPKSAAIGGKSNAGRKTSLDGSQNQDDVVLHVSSKTTLQYRSLPRPSKSSTSGIPGRGGHRSSTSSIDSNVSSKSAGATTSKLREPTKIGSGRSSPVTVNQTDKEKEKVAVSDSESVSLSGSPKSSPTSASACGTQGLRQPGSKYPDIASPTFRRLFGAKAGGKSASAPNTEGAKSSSVVLSPSTSLARQGSLESPSSGTGSMGSAGGLSGSSSPLFNKPSDLTTDVISLSHSLASSPASVHSFTSGGLVWAANLSSSSAGSKDTPSYQSMTSLHTSSESIDLPLSHHGSLSGLTTGTHEVQSLLMRTGSVRSTLSESMQLDRNTLPKKGLRYTPSSRQANQEEGKEWLRSHSTGGLQDTGNQSPLVSPSAMSSSATGKYHFSNLVSPTNLSQFNLPAPSMMRSSSIPAQDSSFDLYDDAQLCGSATSLEERPRAVSHSGSFRDSMEEVHGSSLSLVSSTSSLYSTAEEKAHSEQIHKLRRELVASQEKVATLTSQLSANAHLVAAFEKSLGNMTGRLQSLTMTAEQKESELIELRETIEMLKAQNSAAQAAIQGALNGPDHPPKDLRIRRQHSSESVSSINSATSHSSIGSGNDADSKKKKKKNWLRSSFKQAFGKKKSTKPPSSHSDIEELTDSSLPASPKLPHNAGESGSSSMKPSQSASAICECTEAEAEIILQLKSELREKELKLTDIRLEALSSAHHLDQIREAMNRMQNEIEILKAENDRLKAETGNTAKPARPPSDSSSTASSSSSRQSLGLSLNNLNITESVTSDILLDDTGDATGHKDGRSVKIIVSISKGYGRAKDQKSQAYLIGSIGVSGKTKWDVLDGVIRRLFKEYVFRIDTSSSLGLSSDCIASYCIGDLIRSHNLEVPELLPCGYLVGDNNIITVNLKGVEENSLDSFVFDTLIPKPITQRYFNLLMEHHRIILSGPSGTGKTYLANKLAEYVITKSGRKKTEDAIATFNVDHKSSKELQQYLANLAEQCSADNNGVELPVVIILDNLHHVGSLSDIFNGFLNCKYNKCPYIIGTMNQGVSSSPNLELHHNFRWVLCANHTEPVKGFLGRYLRRKLIEMEIERNIRNNDLVKIIDWIPKTWHHLNSFLETHSSSDVTIGPRLFLPCPMDVEGSRVWFMDLWNYSLVPYVLEAVREGLQMYGKRAPWEDPSKWVLDTYPWSSASLPQEGPALLQLRPEDVGYEACTSTKEATTSKHIPQTDTEGDPLMNMLMKLQEAANYPSTQSCDGDSVSHREDILDTSIESTL.

The region spanning 77 to 184 is the Calponin-homology (CH) domain; the sequence is IEDSKIYTDW…LFFSLSRYKQ (108 aa). 4 stretches are compositionally biased toward polar residues: residues 204–226, 233–243, 257–279, and 300–317; these read THTA…SSLT, SKHSGIATSQK, ASSS…FNSI, and QPSS…TSGQ. Disordered stretches follow at residues 204–623 and 641–660; these read THTA…QQQH and ENEG…TKMD. The segment covering 318 to 329 has biased composition (low complexity); sequence PPASAIPSPSAS. Residues 335-352 show a composition bias toward polar residues; that stretch reads KSMNVKHSATSTMLTVKQ. Low complexity-rich tracts occupy residues 353-363 and 427-439; these read PSPATSPTPSS and NSGL…TNSS. Residues 465–491 show a composition bias toward basic and acidic residues; the sequence is PKEKEEKTRDKNKACAEKSGKEEKDQV. Positions 522–536 are enriched in low complexity; sequence IPSSSGIPKPGSKVP. A compositionally biased stretch (polar residues) spans 592–623; it reads ASPSSSCVMQVTHSSGQSPGNGAVQLPQQQQH. The stretch at 680-708 forms a coiled coil; sequence EARRMRTVKNIADLRQNLEETMSSLRGTQ. Disordered regions lie at residues 878-1315, 1413-1472, 1653-1758, and 1829-1855; these read ADSW…SPLF, LSES…AMSS, GALN…KPSQ, and ETGN…SRQS. 2 stretches are compositionally biased toward low complexity: residues 883 to 896 and 904 to 916; these read DSSS…DTLD and NTTS…SNIT. Polar residues predominate over residues 917-926; that stretch reads VPSRKNTQLK. Basic and acidic residues predominate over residues 943–960; it reads EELKKAEGDCDSHGDGAA. Composition is skewed to polar residues over residues 978-989 and 997-1013; these read QKASLSVSQTGS and QGGT…TSAL. Positions 1017 to 1029 are enriched in basic and acidic residues; sequence GKTDDAKASEKGK. 2 stretches are compositionally biased toward low complexity: residues 1077 to 1095 and 1160 to 1173; these read GAST…GSAT and SSTS…SSKS. Residues 1190–1199 show a composition bias toward polar residues; sequence GRSSPVTVNQ. 3 stretches are compositionally biased toward low complexity: residues 1209-1229, 1256-1266, and 1274-1285; these read VSDS…TSAS, GAKAGGKSASA, and SSSVVLSPSTSL. Gly residues predominate over residues 1299-1308; the sequence is GSMGSAGGLS. A compositionally biased stretch (basic and acidic residues) spans 1439–1448; sequence NQEEGKEWLR. Polar residues predominate over residues 1449-1461; the sequence is SHSTGGLQDTGNQ. Phosphoserine is present on residues Ser1462 and Ser1466. Low complexity predominate over residues 1462–1472; that stretch reads SPLVSPSAMSS. The stretch at 1565-1656 forms a coiled coil; sequence AEEKAHSEQI…AQAAIQGALN (92 aa). 2 stretches are compositionally biased toward low complexity: residues 1675–1692 and 1749–1758; these read SVSS…GSGN and SGSSSMKPSQ. A coiled-coil region spans residues 1768 to 1835; sequence EAEAEIILQL…LKAETGNTAK (68 aa). Positions 1841-1855 are enriched in low complexity; it reads SDSSSTASSSSSRQS.

This sequence belongs to the Nav/unc-53 family. Present in neurons from central and peripheral nervous systems (at protein level). Highly expressed in brain cortex, midbrain, cerebellum and hippocampus.

The protein localises to the nucleus outer membrane. Its function is as follows. Plays a role in cell migration. May be involved in neuron regeneration. May regulate IL2 production by T-cells. The protein is Neuron navigator 3 (Nav3) of Mus musculus (Mouse).